Here is a 244-residue protein sequence, read N- to C-terminus: Lactate utilization protein A (244 aa).

This sequence belongs to the LutA/YkgE family.

Is involved in L-lactate degradation and allows cells to grow with lactate as the sole carbon source. This is Lactate utilization protein A from Halalkalibacterium halodurans (strain ATCC BAA-125 / DSM 18197 / FERM 7344 / JCM 9153 / C-125) (Bacillus halodurans).